Reading from the N-terminus, the 180-residue chain is Large ribosomal subunit protein uL5 (180 aa).

The protein belongs to the universal ribosomal protein uL5 family. In terms of assembly, part of the 50S ribosomal subunit; part of the 5S rRNA/L5/L18/L25 subcomplex. Contacts the 5S rRNA and the P site tRNA. Forms a bridge to the 30S subunit in the 70S ribosome.

In terms of biological role, this is one of the proteins that bind and probably mediate the attachment of the 5S RNA into the large ribosomal subunit, where it forms part of the central protuberance. In the 70S ribosome it contacts protein S13 of the 30S subunit (bridge B1b), connecting the 2 subunits; this bridge is implicated in subunit movement. Contacts the P site tRNA; the 5S rRNA and some of its associated proteins might help stabilize positioning of ribosome-bound tRNAs. This is Large ribosomal subunit protein uL5 from Moorella thermoacetica (strain ATCC 39073 / JCM 9320).